Here is an 850-residue protein sequence, read N- to C-terminus: Lon protease (850 aa).

The Lon N-terminal domain maps to 38–232; it reads LPVLPLRDVV…LLVGLVDGEI (195 aa). ATP is bound at residue 384–391; sequence GPPGVGKT. The Lon proteolytic domain maps to 634–815; that stretch reads ENEIGLVTGL…DEVLDLALER (182 aa). Residues S721 and K764 contribute to the active site. Residues 819–850 are disordered; the sequence is PKKAGKEKARKTAPRVAVRGKSRSTPGTRVKH. Positions 821–840 are enriched in basic residues; that stretch reads KAGKEKARKTAPRVAVRGKS. Positions 841-850 are enriched in polar residues; sequence RSTPGTRVKH.

The protein belongs to the peptidase S16 family. Homohexamer. Organized in a ring with a central cavity.

The protein localises to the cytoplasm. The catalysed reaction is Hydrolysis of proteins in presence of ATP.. In terms of biological role, ATP-dependent serine protease that mediates the selective degradation of mutant and abnormal proteins as well as certain short-lived regulatory proteins. Required for cellular homeostasis and for survival from DNA damage and developmental changes induced by stress. Degrades polypeptides processively to yield small peptide fragments that are 5 to 10 amino acids long. Binds to DNA in a double-stranded, site-specific manner. The chain is Lon protease from Xanthomonas oryzae pv. oryzae (strain KACC10331 / KXO85).